The primary structure comprises 212 residues: GTP-binding protein EngB (212 aa).

The 177-residue stretch at 36 to 212 folds into the EngB-type G domain; that stretch reads TAPEVAFAGR…LRAAVYDAII (177 aa). GTP contacts are provided by residues 44 to 51, 71 to 75, 91 to 94, 158 to 161, and 192 to 194; these read GRSNVGKS, GRTQE, DMPG, TKSD, and TSS. Ser-51 and Thr-73 together coordinate Mg(2+).

Belongs to the TRAFAC class TrmE-Era-EngA-EngB-Septin-like GTPase superfamily. EngB GTPase family. Mg(2+) serves as cofactor.

In terms of biological role, necessary for normal cell division and for the maintenance of normal septation. This chain is GTP-binding protein EngB, found in Zymomonas mobilis subsp. mobilis (strain ATCC 31821 / ZM4 / CP4).